A 446-amino-acid chain; its full sequence is Glutamate--tRNA ligase 2 (446 aa).

Positions 8–18 (PSPTGYLHIGN) match the 'HIGH' region motif. The short motif at 239–243 (GLSKR) is the 'KMSKS' region element. K242 provides a ligand contact to ATP.

The protein belongs to the class-I aminoacyl-tRNA synthetase family. Glutamate--tRNA ligase type 1 subfamily. As to quaternary structure, monomer.

It localises to the cytoplasm. The catalysed reaction is tRNA(Glu) + L-glutamate + ATP = L-glutamyl-tRNA(Glu) + AMP + diphosphate. Its function is as follows. Catalyzes the attachment of glutamate to tRNA(Glu) in a two-step reaction: glutamate is first activated by ATP to form Glu-AMP and then transferred to the acceptor end of tRNA(Glu). This Methylobacterium radiotolerans (strain ATCC 27329 / DSM 1819 / JCM 2831 / NBRC 15690 / NCIMB 10815 / 0-1) protein is Glutamate--tRNA ligase 2.